A 659-amino-acid polypeptide reads, in one-letter code: ATP-binding cassette sub-family D member 3 (659 aa).

Residues 2–61 are interaction with PEX19; that stretch reads AAFSKYLTARNSSLAGAAFLLFCLLHKRRRALGLHGKKSGKPPLQNNEKEGKKERAVVDK. The N-linked (GlcNAc...) asparagine glycan is linked to N12. An N6-acetyllysine modification is found at K61. Residues 84-104 form a helical membrane-spanning segment; the sequence is GYLILIAVMLVSRTYCDVWMI. The region spanning 85–372 is the ABC transmembrane type-1 domain; the sequence is YLILIAVMLV…MLLRMSQALG (288 aa). N106 is a glycosylation site (N-linked (GlcNAc...) asparagine). The helical transmembrane segment at 126-146 threads the bilayer; that stretch reads LFNFIAAMPLISLVNNFLKYG. Residue N206 is glycosylated (N-linked (GlcNAc...) asparagine). The chain crosses the membrane as a helical span at residues 224-244; sequence AIGAQGPASMMAYLLVSGLFL. K260 is subject to N6-acetyllysine. The helical transmembrane segment at 313 to 333 threads the bilayer; the sequence is MGFIDSIIAKYIATVVGYLVV. K399 is modified (N6-acetyllysine). S424 carries the post-translational modification Phosphoserine. Residues 434–659 form the ABC transporter domain; the sequence is INADNIIKFD…ITEDTVEFGS (226 aa). 473-480 lines the ATP pocket; the sequence is GPNGCGKS. K533 bears the N6-acetyllysine mark. S659 carries the post-translational modification Phosphoserine.

This sequence belongs to the ABC transporter superfamily. ABCD family. Peroxisomal fatty acyl CoA transporter (TC 3.A.1.203) subfamily. As to quaternary structure, homodimers. Can form heterodimers with ABCD1 and ABCD2. Dimerization is necessary to form an active transporter. Interacts with PEX19; mediates the targeting of ABCD3 to peroxisomes. Ubiquitinated by PEX2 during pexophagy in response to starvation, leading to its degradation.

It is found in the peroxisome membrane. It carries out the reaction a very long-chain fatty acyl-CoA + H2O = a very long-chain fatty acid + CoA + H(+). The enzyme catalyses a very long-chain fatty acid(in) + ATP + H2O = a very long-chain fatty acid(out) + ADP + phosphate + H(+). It catalyses the reaction a long-chain fatty acyl-CoA + H2O = a long-chain fatty acid + CoA + H(+). The catalysed reaction is a long-chain fatty acid(in) + ATP + H2O = a long-chain fatty acid(out) + ADP + phosphate + H(+). It carries out the reaction pristanoyl-CoA + H2O = 2,6,10,14-tetramethylpentadecanoate + CoA + H(+). The enzyme catalyses 2,6,10,14-tetramethylpentadecanoate(in) + ATP + H2O = 2,6,10,14-tetramethylpentadecanoate(out) + ADP + phosphate + H(+). It catalyses the reaction hexadecanedioyl-CoA + H2O = hexadecanedioate + CoA + H(+). The catalysed reaction is hexadecanedioate(in) + ATP + H2O = hexadecanedioate(out) + ADP + phosphate + H(+). It carries out the reaction (5Z,8Z,11Z,14Z,17Z)-eicosapentaenoyl-CoA + H2O = (5Z,8Z,11Z,14Z,17Z)-eicosapentaenoate + CoA + H(+). The enzyme catalyses (5Z,8Z,11Z,14Z,17Z)-eicosapentaenoate(in) + ATP + H2O = (5Z,8Z,11Z,14Z,17Z)-eicosapentaenoate(out) + ADP + phosphate + H(+). It catalyses the reaction (4Z,7Z,10Z,13Z,16Z,19Z)-docosahexaenoyl-CoA + H2O = (4Z,7Z,10Z,13Z,16Z,19Z)-docosahexaenoate + CoA + H(+). The catalysed reaction is (4Z,7Z,10Z,13Z,16Z,19Z)-docosahexaenoate(in) + ATP + H2O = (4Z,7Z,10Z,13Z,16Z,19Z)-docosahexaenoate(out) + ADP + phosphate + H(+). Functionally, broad substrate specificity ATP-dependent transporter of the ATP-binding cassette (ABC) family that catalyzes the transport of long-chain fatty acids (LCFA)-CoA, dicarboxylic acids-CoA, long-branched-chain fatty acids-CoA and bile acids from the cytosol to the peroxisome lumen for beta-oxydation. Has fatty acyl-CoA thioesterase and ATPase activities. Probably hydrolyzes fatty acyl-CoAs into free fatty acids prior to their ATP-dependent transport into peroxisomes. Thus, play a role in regulation of LCFAs and energy metabolism namely, in the degradation and biosynthesis of fatty acids by beta-oxidation. This is ATP-binding cassette sub-family D member 3 (Abcd3) from Rattus norvegicus (Rat).